A 1483-amino-acid chain; its full sequence is Neuropathy target esterase sws (1483 aa).

Residues 1-34 lie on the Lumenal side of the membrane; the sequence is MDVLELLRASANGCYNTLFSDAWFQYVSKQIATT. Residues 35–55 form a helical membrane-spanning segment; it reads MYWYGALLVIGVLFIAWFLYF. Residues 56–1483 lie on the Cytoplasmic side of the membrane; that stretch reads KRLARLRLRD…ENLTKTDTKN (1428 aa). 174-301 is a binding site for a nucleoside 3',5'-cyclic phosphate; sequence IFGHFEKPIF…IRVIQVIMIR (128 aa). Disordered stretches follow at residues 348–380 and 404–440; these read ASRPVVRAPTSPNSRLSREEHTLSDPDPNPNAN and SSAVSVNQAGTRRSSTTYGPSGESPNGNANTAPGTSI. The segment covering 413–440 has biased composition (polar residues); the sequence is GTRRSSTTYGPSGESPNGNANTAPGTSI. Ser-418 and Ser-424 each carry phosphoserine. A nucleoside 3',5'-cyclic phosphate-binding positions include 456-585 and 574-701; these read ELGL…VVRR and IVLD…LSHR. Positions 927-1093 constitute a PNPLA domain; it reads LVLGGGGARG…VNNLPGHLWR (167 aa). Positions 931-936 match the GXGXXG motif; the sequence is GGGARG. The GXSXG motif lies at 958-962; sequence GVSIG. Ser-960 functions as the Nucleophile in the catalytic mechanism. The active-site Proton acceptor is the Asp-1080. Positions 1080 to 1082 match the DGA/G motif; that stretch reads DGG. Ser-1174 is subject to Phosphoserine. The interval 1349–1483 is disordered; the sequence is DKATQSTPPT…ENLTKTDTKN (135 aa). Polar residues predominate over residues 1351 to 1373; the sequence is ATQSTPPTPNKQHALSPTSSQTN. A compositionally biased stretch (basic and acidic residues) spans 1382–1396; it reads KPKEKQPSYDKLDRE. Residues 1410–1419 show a composition bias toward low complexity; it reads ERSSMQQRDS. The segment covering 1445–1458 has biased composition (basic and acidic residues); sequence LNKPEQQPEQKPVP. The segment covering 1465–1474 has biased composition (low complexity); the sequence is QKQQDQQQQE.

This sequence belongs to the NTE family. As to quaternary structure, interacts with Pka-C3; interaction inhibits the catalytic function of Pka-C3 and the esterase activity of sws.

The protein localises to the endoplasmic reticulum membrane. The enzyme catalyses a 1-acyl-sn-glycero-3-phosphocholine + H2O = sn-glycerol 3-phosphocholine + a fatty acid + H(+). Functionally, phospholipase B that deacylates intracellular phosphatidylcholine (PtdCho), generating glycerophosphocholine (GroPtdCho). This deacylation occurs at both sn-2 and sn-1 positions of PtdCho. Its specific chemical modification by certain organophosphorus (OP) compounds leads to distal axonopathy. Plays a role in the signaling mechanism between neurons and glia that regulates glia wrapping during development of the adult brain. Essential for membrane lipid homeostasis and cell survival in both neurons and glia of the adult brain. This is Neuropathy target esterase sws from Drosophila virilis (Fruit fly).